A 533-amino-acid chain; its full sequence is CTP synthase (533 aa).

Residues 1–265 form an amidoligase domain region; it reads MTKFIFVTGG…PAYLARRLGL (265 aa). Residue serine 13 participates in CTP binding. Serine 13 contributes to the UTP binding site. Residue 14 to 19 participates in ATP binding; that stretch reads GLGKGI. Position 54 (tyrosine 54) interacts with L-glutamine. ATP is bound at residue aspartate 71. 2 residues coordinate Mg(2+): aspartate 71 and glutamate 139. Residues 146–148, 186–191, and lysine 222 contribute to the CTP site; these read DIE and KTKPTQ. UTP contacts are provided by residues 186–191 and lysine 222; that span reads KTKPTQ. A Glutamine amidotransferase type-1 domain is found at 290 to 532; it reads EIAIVGKYVK…VEAAKKKKYG (243 aa). L-glutamine is bound at residue glycine 351. Cysteine 378 serves as the catalytic Nucleophile; for glutamine hydrolysis. Residues 379-382, glutamate 402, and arginine 459 contribute to the L-glutamine site; that span reads FGFQ. Catalysis depends on residues histidine 505 and glutamate 507.

It belongs to the CTP synthase family. In terms of assembly, homotetramer.

The catalysed reaction is UTP + L-glutamine + ATP + H2O = CTP + L-glutamate + ADP + phosphate + 2 H(+). It catalyses the reaction L-glutamine + H2O = L-glutamate + NH4(+). It carries out the reaction UTP + NH4(+) + ATP = CTP + ADP + phosphate + 2 H(+). It functions in the pathway pyrimidine metabolism; CTP biosynthesis via de novo pathway; CTP from UDP: step 2/2. With respect to regulation, allosterically activated by GTP, when glutamine is the substrate; GTP has no effect on the reaction when ammonia is the substrate. The allosteric effector GTP functions by stabilizing the protein conformation that binds the tetrahedral intermediate(s) formed during glutamine hydrolysis. Inhibited by the product CTP, via allosteric rather than competitive inhibition. Catalyzes the ATP-dependent amination of UTP to CTP with either L-glutamine or ammonia as the source of nitrogen. Regulates intracellular CTP levels through interactions with the four ribonucleotide triphosphates. This is CTP synthase from Thermococcus kodakarensis (strain ATCC BAA-918 / JCM 12380 / KOD1) (Pyrococcus kodakaraensis (strain KOD1)).